We begin with the raw amino-acid sequence, 284 residues long: Pheromone-regulated membrane protein 4 (284 aa).

A helical transmembrane segment spans residues 20 to 38 (IISLTLVLLGVFSFLLLTW). The Glutaredoxin domain occupies 157–272 (RTDFLDIIRT…PLLKSEARGN (116 aa)).

It localises to the membrane. This is Pheromone-regulated membrane protein 4 (PRM4) from Saccharomyces cerevisiae (strain ATCC 204508 / S288c) (Baker's yeast).